A 417-amino-acid polypeptide reads, in one-letter code: MLKKDMNIADYDPELFKAIQNETLRQEEHIELIASENYTSPRVMEAQGSQLTNKYAEGYPGKRYYGGCEYVDVVETLAIERAKELFGATYANVQPHSGSQANSAVYMALLKPGDTVLGMNLAHGGHLTHGSPVNFSGKLYNIIPYGIDESGKIDYDEMERLAVEHKPKMMIGGFSAYSGIVDWAKMREIADKIGAYLFVDMAHVAGLIAAGVYPNPVPHAHVVTSTTHKTLAGPRGGVILSAADDEDLYKKLNSAVFPGGQGGPLMHVIAGKAVAFKEALEPEFKVYQQQVVNNAKAMVEVFLERGYKIVSGGTSNHLMLVDLIGRDLTGKEADAALGSANITVNKNSVPNDPRSPFVTSGVRIGTPAITRRGFKEAESKELTGWICDILDDASNPAVIERVKGQVLALCARFPVYG.

(6S)-5,6,7,8-tetrahydrofolate-binding positions include Leu-121 and 125–127 (GHL). Lys-229 is modified (N6-(pyridoxal phosphate)lysine). 355–357 (SPF) contacts (6S)-5,6,7,8-tetrahydrofolate.

This sequence belongs to the SHMT family. In terms of assembly, homodimer. Pyridoxal 5'-phosphate is required as a cofactor.

The protein localises to the cytoplasm. It carries out the reaction (6R)-5,10-methylene-5,6,7,8-tetrahydrofolate + glycine + H2O = (6S)-5,6,7,8-tetrahydrofolate + L-serine. It functions in the pathway one-carbon metabolism; tetrahydrofolate interconversion. Its pathway is amino-acid biosynthesis; glycine biosynthesis; glycine from L-serine: step 1/1. Functionally, catalyzes the reversible interconversion of serine and glycine with tetrahydrofolate (THF) serving as the one-carbon carrier. This reaction serves as the major source of one-carbon groups required for the biosynthesis of purines, thymidylate, methionine, and other important biomolecules. Also exhibits THF-independent aldolase activity toward beta-hydroxyamino acids, producing glycine and aldehydes, via a retro-aldol mechanism. The chain is Serine hydroxymethyltransferase from Shewanella baltica (strain OS195).